Here is a 255-residue protein sequence, read N- to C-terminus: Triosephosphate isomerase (255 aa).

Residue 10–12 (NWK) participates in substrate binding. Catalysis depends on histidine 96, which acts as the Electrophile. Glutamate 169 acts as the Proton acceptor in catalysis. Residues glycine 175, serine 214, and 235-236 (GG) contribute to the substrate site.

It belongs to the triosephosphate isomerase family. As to quaternary structure, homodimer.

The protein resides in the cytoplasm. It catalyses the reaction D-glyceraldehyde 3-phosphate = dihydroxyacetone phosphate. The protein operates within carbohydrate biosynthesis; gluconeogenesis. It functions in the pathway carbohydrate degradation; glycolysis; D-glyceraldehyde 3-phosphate from glycerone phosphate: step 1/1. Its function is as follows. Involved in the gluconeogenesis. Catalyzes stereospecifically the conversion of dihydroxyacetone phosphate (DHAP) to D-glyceraldehyde-3-phosphate (G3P). In Coxiella burnetii (strain Dugway 5J108-111), this protein is Triosephosphate isomerase.